We begin with the raw amino-acid sequence, 234 residues long: Endonuclease NucS (234 aa).

The protein belongs to the NucS endonuclease family.

The protein localises to the cytoplasm. Cleaves both 3' and 5' ssDNA extremities of branched DNA structures. In Bifidobacterium animalis subsp. lactis (strain AD011), this protein is Endonuclease NucS.